Consider the following 492-residue polypeptide: Glutamyl-tRNA(Gln) amidotransferase subunit A (492 aa).

Catalysis depends on charge relay system residues lysine 79 and serine 154. The Acyl-ester intermediate role is filled by serine 178.

This sequence belongs to the amidase family. GatA subfamily. As to quaternary structure, heterotrimer of A, B and C subunits.

The catalysed reaction is L-glutamyl-tRNA(Gln) + L-glutamine + ATP + H2O = L-glutaminyl-tRNA(Gln) + L-glutamate + ADP + phosphate + H(+). Allows the formation of correctly charged Gln-tRNA(Gln) through the transamidation of misacylated Glu-tRNA(Gln) in organisms which lack glutaminyl-tRNA synthetase. The reaction takes place in the presence of glutamine and ATP through an activated gamma-phospho-Glu-tRNA(Gln). This Acinetobacter baumannii (strain AB0057) protein is Glutamyl-tRNA(Gln) amidotransferase subunit A.